The chain runs to 154 residues: Transcriptional repressor NrdR (154 aa).

A zinc finger spans residues 3-34; the sequence is CPFCNHGELKVIDSRNAPESNAIKRRRECLRC. The ATP-cone domain occupies 48–138; sequence VQVLKRDGRY…VYRRFKDVGE (91 aa).

This sequence belongs to the NrdR family. Zn(2+) is required as a cofactor.

Functionally, negatively regulates transcription of bacterial ribonucleotide reductase nrd genes and operons by binding to NrdR-boxes. The sequence is that of Transcriptional repressor NrdR from Chlamydia trachomatis serovar L2 (strain ATCC VR-902B / DSM 19102 / 434/Bu).